A 311-amino-acid chain; its full sequence is Methionyl-tRNA formyltransferase (311 aa).

Residues 33–52 (RPDRPAGRGRHQRSSPVREL) form a disordered region. 110 to 113 (SLLP) is a binding site for (6S)-5,6,7,8-tetrahydrofolate.

It belongs to the Fmt family.

The catalysed reaction is L-methionyl-tRNA(fMet) + (6R)-10-formyltetrahydrofolate = N-formyl-L-methionyl-tRNA(fMet) + (6S)-5,6,7,8-tetrahydrofolate + H(+). Functionally, attaches a formyl group to the free amino group of methionyl-tRNA(fMet). The formyl group appears to play a dual role in the initiator identity of N-formylmethionyl-tRNA by promoting its recognition by IF2 and preventing the misappropriation of this tRNA by the elongation apparatus. In Parafrankia sp. (strain EAN1pec), this protein is Methionyl-tRNA formyltransferase.